Reading from the N-terminus, the 155-residue chain is Small ribosomal subunit protein uS7 (155 aa).

The protein belongs to the universal ribosomal protein uS7 family. Part of the 30S ribosomal subunit. Contacts proteins S9 and S11.

Its function is as follows. One of the primary rRNA binding proteins, it binds directly to 16S rRNA where it nucleates assembly of the head domain of the 30S subunit. Is located at the subunit interface close to the decoding center, probably blocks exit of the E-site tRNA. The polypeptide is Small ribosomal subunit protein uS7 (Chlorobium phaeobacteroides (strain BS1)).